A 492-amino-acid polypeptide reads, in one-letter code: Cysteine--tRNA ligase (492 aa).

Zn(2+) is bound at residue C27. Positions 29 to 39 match the 'HIGH' region motif; it reads VTVYDLCHLGH. Zn(2+) contacts are provided by C211, H236, and E240. Positions 268 to 272 match the 'KMSKS' region motif; sequence KMSKS. K271 provides a ligand contact to ATP.

This sequence belongs to the class-I aminoacyl-tRNA synthetase family. Monomer. It depends on Zn(2+) as a cofactor.

The protein localises to the cytoplasm. It carries out the reaction tRNA(Cys) + L-cysteine + ATP = L-cysteinyl-tRNA(Cys) + AMP + diphosphate. The chain is Cysteine--tRNA ligase from Prochlorococcus marinus (strain MIT 9515).